A 645-amino-acid chain; its full sequence is ATP-dependent zinc metalloprotease FtsH (645 aa).

Residues 1 to 8 lie on the Cytoplasmic side of the membrane; sequence MDFNREHK. A helical transmembrane segment spans residues 9–29; that stretch reads INFLYVLAAMVGVLLIQSLVS. Over 30 to 105 the chain is Periplasmic; that stretch reads QPDHIRTIPY…FSGEPEPGPW (76 aa). The helical transmembrane segment at 106–126 threads the bilayer; sequence PTILGWLMPIVGFALVWMFLI. The Cytoplasmic segment spans residues 127–645; sequence RPMSMGPGMD…ALTVEGGEAQ (519 aa). 199 to 206 is a binding site for ATP; the sequence is GPPGTGKT. His423 is a binding site for Zn(2+). Glu424 is a catalytic residue. Positions 427 and 500 each coordinate Zn(2+). The disordered stretch occupies residues 612-645; it reads SASVLRDGGDGAADAGQDRSGEHRALTVEGGEAQ. Residues 627–637 are compositionally biased toward basic and acidic residues; it reads GQDRSGEHRAL.

The protein in the central section; belongs to the AAA ATPase family. In the C-terminal section; belongs to the peptidase M41 family. In terms of assembly, homohexamer. Zn(2+) is required as a cofactor.

The protein localises to the cell inner membrane. Functionally, acts as a processive, ATP-dependent zinc metallopeptidase for both cytoplasmic and membrane proteins. Plays a role in the quality control of integral membrane proteins. In Paraburkholderia phymatum (strain DSM 17167 / CIP 108236 / LMG 21445 / STM815) (Burkholderia phymatum), this protein is ATP-dependent zinc metalloprotease FtsH.